The chain runs to 579 residues: Chromosomal replication initiator protein DnaA (579 aa).

Positions 1–71 (MQDFWQAAAA…TALACEYWET (71 aa)) are domain I, interacts with DnaA modulators. The tract at residues 71–242 (TQVSVHFVLD…QQSDTVHERS (172 aa)) is domain II. 2 disordered regions span residues 131–196 (AGAQ…SAAH) and 212–240 (EASARSYRVPSPQPAAPAGAQQQSDTVHE). Over residues 171–183 (SQSQQSAQGRGAA) the composition is skewed to low complexity. The domain III, AAA+ region stretch occupies residues 243–459 (RLNPILTFDN…GALRKILAFS (217 aa)). Positions 287, 289, 290, and 291 each coordinate ATP. The interval 460 to 579 (NFHGKDITID…LHVLEQTLKG (120 aa)) is domain IV, binds dsDNA.

It belongs to the DnaA family. Oligomerizes as a right-handed, spiral filament on DNA at oriC.

Its subcellular location is the cytoplasm. In terms of biological role, plays an essential role in the initiation and regulation of chromosomal replication. ATP-DnaA binds to the origin of replication (oriC) to initiate formation of the DNA replication initiation complex once per cell cycle. Binds the DnaA box (a 9 base pair repeat at the origin) and separates the double-stranded (ds)DNA. Forms a right-handed helical filament on oriC DNA; dsDNA binds to the exterior of the filament while single-stranded (ss)DNA is stabiized in the filament's interior. The ATP-DnaA-oriC complex binds and stabilizes one strand of the AT-rich DNA unwinding element (DUE), permitting loading of DNA polymerase. After initiation quickly degrades to an ADP-DnaA complex that is not apt for DNA replication. Binds acidic phospholipids. In Cupriavidus metallidurans (strain ATCC 43123 / DSM 2839 / NBRC 102507 / CH34) (Ralstonia metallidurans), this protein is Chromosomal replication initiator protein DnaA.